Consider the following 45-residue polypeptide: Putative metallothionein-like protein 1B (45 aa).

Belongs to the metallothionein superfamily. Type 15 family.

In terms of biological role, metallothioneins have a high content of cysteine residues that bind various heavy metals. Confers tolerance to cadmium (Cd) and plays a role in Cd and zinc (Zn) homeostasis. The sequence is that of Putative metallothionein-like protein 1B (MT1B) from Arabidopsis thaliana (Mouse-ear cress).